We begin with the raw amino-acid sequence, 320 residues long: UDP-3-O-acyl-N-acetylglucosamine deacetylase (320 aa).

Positions 92, 251, and 255 each coordinate Zn(2+). The active-site Proton donor is histidine 278.

It belongs to the LpxC family. It depends on Zn(2+) as a cofactor.

The enzyme catalyses a UDP-3-O-[(3R)-3-hydroxyacyl]-N-acetyl-alpha-D-glucosamine + H2O = a UDP-3-O-[(3R)-3-hydroxyacyl]-alpha-D-glucosamine + acetate. It functions in the pathway glycolipid biosynthesis; lipid IV(A) biosynthesis; lipid IV(A) from (3R)-3-hydroxytetradecanoyl-[acyl-carrier-protein] and UDP-N-acetyl-alpha-D-glucosamine: step 2/6. Functionally, catalyzes the hydrolysis of UDP-3-O-myristoyl-N-acetylglucosamine to form UDP-3-O-myristoylglucosamine and acetate, the committed step in lipid A biosynthesis. The sequence is that of UDP-3-O-acyl-N-acetylglucosamine deacetylase from Psychrobacter arcticus (strain DSM 17307 / VKM B-2377 / 273-4).